Here is a 702-residue protein sequence, read N- to C-terminus: Kinesin-like protein KIF3A (702 aa).

The 332-residue stretch at Asn14–Ile345 folds into the Kinesin motor domain. ATP is bound at residue Gly100–Thr107. Residues Pro355–Leu593 adopt a coiled-coil conformation. Disordered regions lie at residues Lys372–Glu424 and Leu667–Gln702. Positions Glu376 to Glu400 are enriched in acidic residues. Positions Asp410–Glu424 are enriched in basic and acidic residues. The globular stretch occupies residues Pro600–Gln702. A compositionally biased stretch (basic residues) spans Thr675–Ser690. Ser690 is subject to Phosphoserine.

It belongs to the TRAFAC class myosin-kinesin ATPase superfamily. Kinesin family. Kinesin II subfamily. Heterodimer of KIF3A and KIF3B. Interacts with CIMAP3. Interacts with CLN3. Interacts with DCTN1. Interacts with FLCN. Interacts with AP3B1.

It localises to the cytoplasm. The protein localises to the cytoskeleton. The protein resides in the cell projection. Its subcellular location is the cilium. It is found in the microtubule organizing center. It localises to the centrosome. The protein localises to the centriole. Functionally, microtubule-based anterograde translocator for membranous organelles. Plus end-directed microtubule sliding activity in vitro. Plays a role in primary cilia formation. Plays a role in centriole cohesion and subdistal appendage organization and function. Regulates the formation of the subdistal appendage via recruitment of DCTN1 to the centriole. Also required for ciliary basal feet formation and microtubule anchoring to mother centriole. This Pongo abelii (Sumatran orangutan) protein is Kinesin-like protein KIF3A (KIF3A).